The primary structure comprises 485 residues: ETS translocation variant 4 (485 aa).

A Glycyl lysine isopeptide (Lys-Gly) (interchain with G-Cter in SUMO2) cross-link involves residue K6. 2 disordered regions span residues 79 to 114 (PDFH…RKPP) and 135 to 214 (IAIK…QHQL). K95 participates in a covalent cross-link: Glycyl lysine isopeptide (Lys-Gly) (interchain with G-Cter in SUMO). S100 bears the Phosphoserine mark. Residue K138 forms a Glycyl lysine isopeptide (Lys-Gly) (interchain with G-Cter in SUMO2) linkage. S139 and S148 each carry phosphoserine. A compositionally biased stretch (low complexity) spans 158-171 (QQQSLLRASSSSQS). S215 is modified (phosphoserine). Glycyl lysine isopeptide (Lys-Gly) (interchain with G-Cter in SUMO) cross-links involve residues K227 and K261. K323 participates in a covalent cross-link: Glycyl lysine isopeptide (Lys-Gly) (interchain with G-Cter in SUMO2). Residues 342-422 (LQLWQFLVAL…AGERYVYKFV (81 aa)) constitute a DNA-binding region (ETS).

This sequence belongs to the ETS family. In terms of processing, sumoylated; enhanced upon ERK/MAP kinase pathway activation it positively regulates the transcriptional activator capacity. Sumoylation at Lys-95 probably requires phosphorylation at Ser-100. Transiently polysumoylated and desumoylated by SENP1. Sumoylation is a prerequisite to polyubiquitination which in turn increases proteasomal-mediated degradation. Probably polyubiquitinated by RNF4 and deubiquitinated by USP2. In terms of tissue distribution, epididymis and brain.

It localises to the nucleus. Its function is as follows. Transcriptional activator. May play a role in keratinocyte differentiation. This Mus musculus (Mouse) protein is ETS translocation variant 4 (Etv4).